The primary structure comprises 233 residues: Homeobox protein Hox-D4a (233 aa).

The Antp-type hexapeptide signature appears at 124–129 (VYPWMK). Residues 145 to 204 (PKRSRTAYTRQQVLELEKEFHFNRYLTRRRRIEIAHTLCLSERQIKIWFQNRRMKWTKDH) constitute a DNA-binding region (homeobox). Residues 203–233 (DHKLPNTKGRSAPASSHLQSIHKDQTDITSL) are disordered. Over residues 223 to 233 (IHKDQTDITSL) the composition is skewed to basic and acidic residues.

It belongs to the Antp homeobox family. Deformed subfamily.

Its subcellular location is the nucleus. Sequence-specific transcription factor which is part of a developmental regulatory system that provides cells with specific positional identities on the anterior-posterior axis. The sequence is that of Homeobox protein Hox-D4a (hoxd4a) from Takifugu rubripes (Japanese pufferfish).